We begin with the raw amino-acid sequence, 301 residues long: MNKIISILKPTGMTSHDVVSRVRKILNIKKVGHTGTLDPDASGVLPICIGKATKVCEVILNKDKSYICELTLGISTDTYDASGEILKKVDDFKFSNEDIERAFDTQRGEINQLPPIYSALKVNGKRMCDLVRSGRQSEITLKTRRVNIKDIKILSIKGNKVMFYVECSKGTYVRSICHDIGEYLGCGAHMSFLNRTSSGKFDLDNSITLEELELFYENKTLDKYLYDIDYVLDSFNYVVLNPNAIKYYSNGGSIDDKRFLKNNFDKDDEFVRVYSTDNFLGLGKLSKHNNTISVKSDKMFI.

Catalysis depends on aspartate 38, which acts as the Nucleophile.

This sequence belongs to the pseudouridine synthase TruB family. Type 1 subfamily.

It catalyses the reaction uridine(55) in tRNA = pseudouridine(55) in tRNA. Its function is as follows. Responsible for synthesis of pseudouridine from uracil-55 in the psi GC loop of transfer RNAs. The polypeptide is tRNA pseudouridine synthase B (Clostridioides difficile (strain 630) (Peptoclostridium difficile)).